Reading from the N-terminus, the 391-residue chain is GTPase Obg (391 aa).

An Obg domain is found at 1–159 (MKFVDEAVVK…REIRLELLLL (159 aa)). The OBG-type G domain maps to 160-333 (ADVGMLGLPN…LCYKLADFME (174 aa)). GTP-binding positions include 166-173 (GLPNAGKS), 191-195 (FTTLI), 213-216 (DIPG), 283-286 (NKTD), and 314-316 (SAI). 2 residues coordinate Mg(2+): Ser-173 and Thr-193. Residues 367–383 (TEEDDDDWDDCDDEDDD) show a composition bias toward acidic residues. The interval 367 to 391 (TEEDDDDWDDCDDEDDDGHVVYVRD) is disordered.

The protein belongs to the TRAFAC class OBG-HflX-like GTPase superfamily. OBG GTPase family. In terms of assembly, monomer. Mg(2+) is required as a cofactor.

The protein localises to the cytoplasm. Functionally, an essential GTPase which binds GTP, GDP and possibly (p)ppGpp with moderate affinity, with high nucleotide exchange rates and a fairly low GTP hydrolysis rate. Plays a role in control of the cell cycle, stress response, ribosome biogenesis and in those bacteria that undergo differentiation, in morphogenesis control. The protein is GTPase Obg of Vibrio campbellii (strain ATCC BAA-1116).